A 240-amino-acid chain; its full sequence is Lipoprotein signal peptidase (240 aa).

4 helical membrane passes run 38–58 (LIWKISIILICAFIVLLTSFL), 73–93 (LIPGFLVINITGNTGVSFGTL), 98–118 (PSLVYFVQSIPIVLGFFVLLF), and 120–140 (SNYLLDIGVSLVFFGGLSNII). Active-site residues include aspartate 162 and aspartate 179. Residues 177–197 (FPDTFVIIGMIFVGIQIIISF) form a helical membrane-spanning segment.

This sequence belongs to the peptidase A8 family.

Its subcellular location is the cell membrane. It catalyses the reaction Release of signal peptides from bacterial membrane prolipoproteins. Hydrolyzes -Xaa-Yaa-Zaa-|-(S,diacylglyceryl)Cys-, in which Xaa is hydrophobic (preferably Leu), and Yaa (Ala or Ser) and Zaa (Gly or Ala) have small, neutral side chains.. The protein operates within protein modification; lipoprotein biosynthesis (signal peptide cleavage). Functionally, this protein specifically catalyzes the removal of signal peptides from prolipoproteins. The protein is Lipoprotein signal peptidase of Malacoplasma penetrans (strain HF-2) (Mycoplasma penetrans).